Reading from the N-terminus, the 388-residue chain is Arginine biosynthesis bifunctional protein ArgJ (388 aa).

Substrate is bound by residues Thr-150, Lys-172, Thr-183, Glu-263, Asn-383, and Thr-388. Thr-183 functions as the Nucleophile in the catalytic mechanism.

It belongs to the ArgJ family. In terms of assembly, heterotetramer of two alpha and two beta chains.

The protein resides in the cytoplasm. The catalysed reaction is N(2)-acetyl-L-ornithine + L-glutamate = N-acetyl-L-glutamate + L-ornithine. The enzyme catalyses L-glutamate + acetyl-CoA = N-acetyl-L-glutamate + CoA + H(+). It functions in the pathway amino-acid biosynthesis; L-arginine biosynthesis; L-ornithine and N-acetyl-L-glutamate from L-glutamate and N(2)-acetyl-L-ornithine (cyclic): step 1/1. It participates in amino-acid biosynthesis; L-arginine biosynthesis; N(2)-acetyl-L-ornithine from L-glutamate: step 1/4. Its function is as follows. Catalyzes two activities which are involved in the cyclic version of arginine biosynthesis: the synthesis of N-acetylglutamate from glutamate and acetyl-CoA as the acetyl donor, and of ornithine by transacetylation between N(2)-acetylornithine and glutamate. The sequence is that of Arginine biosynthesis bifunctional protein ArgJ from Corynebacterium efficiens (strain DSM 44549 / YS-314 / AJ 12310 / JCM 11189 / NBRC 100395).